The sequence spans 760 residues: Histone-lysine N-methyltransferase EZH2 (760 aa).

Disordered regions lie at residues 208 to 231 (KDDA…SKKF) and 356 to 444 (PERA…PENV). Positions 361 to 373 (TPSKRSTGRRRGR) are enriched in basic residues. A compositionally biased stretch (polar residues) spans 375–388 (PNSNSRPSTPTVNS). Residues 389–400 (ETKDTDSDREGG) are compositionally biased toward basic and acidic residues. A CXC domain is found at 517-619 (CRKIQLKKDG…SKNVSCKNCS (103 aa)). The SET domain maps to 626–741 (KHLLLAPSDV…TGEELFFDYR (116 aa)).

Belongs to the class V-like SAM-binding methyltransferase superfamily. Histone-lysine methyltransferase family. EZ subfamily. As to quaternary structure, component of the prc2/eed-ezh2 complex.

The protein resides in the nucleus. It carries out the reaction L-lysyl(27)-[histone H3] + 3 S-adenosyl-L-methionine = N(6),N(6),N(6)-trimethyl-L-lysyl(27)-[histone H3] + 3 S-adenosyl-L-homocysteine + 3 H(+). Functionally, polycomb group (PcG) protein. Catalytic subunit of the prc2/eed-ezh2 complex, which methylates 'Lys-9' and 'Lys-27' of histone H3, leading to transcriptional repression of the affected target gene. May regulate the circadian clock via histone methylation at the promoter of the circadian genes. This chain is Histone-lysine N-methyltransferase EZH2 (ezh2), found in Danio rerio (Zebrafish).